The primary structure comprises 143 residues: Transcriptional regulator MraZ (143 aa).

2 consecutive SpoVT-AbrB domains span residues 5-47 (TYTP…PRAA) and 76-119 (TDEQ…DAQA).

The protein belongs to the MraZ family. In terms of assembly, forms oligomers.

The protein resides in the cytoplasm. It localises to the nucleoid. The chain is Transcriptional regulator MraZ from Mycobacterium bovis (strain ATCC BAA-935 / AF2122/97).